The sequence spans 443 residues: Xaa-Pro dipeptidase (443 aa).

Mn(2+)-binding residues include Asp-246, Asp-257, His-339, Glu-384, and Glu-423.

Belongs to the peptidase M24B family. Bacterial-type prolidase subfamily. The cofactor is Mn(2+).

It carries out the reaction Xaa-L-Pro dipeptide + H2O = an L-alpha-amino acid + L-proline. Splits dipeptides with a prolyl residue in the C-terminal position. The sequence is that of Xaa-Pro dipeptidase from Klebsiella pneumoniae (strain 342).